Here is a 427-residue protein sequence, read N- to C-terminus: MKLLTNANTLKGTIRVPGDKSISHRAIIFGSISQGVTRIVDVLRGEDVLSTIEAFKQMGVLIEDDGEIITIYGKGFAGLTQPNNLLDMGNSGTSMRLIAGVLAGQEFEVTMVGDNSLSKRPMDRIALPLSKMGARISGVTNRDLPPLKLQGTKKLKPIFYHLPVASAQVKSALIFAALQTKGESLIVEKEQTRNHTEDMIRQFGGHLDIKDKEIRLNGGQSLVGQDIRVPGDISSAAFWIVVGLIIPNSHIILENVGINETRTGILDVVSKMGGKIKLSSVDNQVKSATLTVDYSHLQATHISGAMIPRLIDELPIIALLATQAQGTTVIADAQELKVKETDRIQVVVESLKQMGADITATADGMIIRGNTPLHAASLDCHGDHRIGMMIAIAALLVKEGEVDLSGEEAINTSYPNFLEHLEGLVNA.

3 residues coordinate 3-phosphoshikimate: lysine 20, serine 21, and arginine 25. Lysine 20 lines the phosphoenolpyruvate pocket. The phosphoenolpyruvate site is built by glycine 92 and arginine 120. 4 residues coordinate 3-phosphoshikimate: serine 166, glutamine 168, aspartate 312, and lysine 339. Glutamine 168 contributes to the phosphoenolpyruvate binding site. Aspartate 312 serves as the catalytic Proton acceptor. Positions 343 and 385 each coordinate phosphoenolpyruvate.

It belongs to the EPSP synthase family. Monomer.

It localises to the cytoplasm. It catalyses the reaction 3-phosphoshikimate + phosphoenolpyruvate = 5-O-(1-carboxyvinyl)-3-phosphoshikimate + phosphate. It functions in the pathway metabolic intermediate biosynthesis; chorismate biosynthesis; chorismate from D-erythrose 4-phosphate and phosphoenolpyruvate: step 6/7. Its function is as follows. Catalyzes the transfer of the enolpyruvyl moiety of phosphoenolpyruvate (PEP) to the 5-hydroxyl of shikimate-3-phosphate (S3P) to produce enolpyruvyl shikimate-3-phosphate and inorganic phosphate. This chain is 3-phosphoshikimate 1-carboxyvinyltransferase, found in Streptococcus agalactiae serotype III (strain NEM316).